The sequence spans 229 residues: Large ribosomal subunit protein uL1 (229 aa).

Belongs to the universal ribosomal protein uL1 family. As to quaternary structure, part of the 50S ribosomal subunit.

Its function is as follows. Binds directly to 23S rRNA. The L1 stalk is quite mobile in the ribosome, and is involved in E site tRNA release. In terms of biological role, protein L1 is also a translational repressor protein, it controls the translation of the L11 operon by binding to its mRNA. This Ureaplasma parvum serovar 3 (strain ATCC 27815 / 27 / NCTC 11736) protein is Large ribosomal subunit protein uL1.